The sequence spans 360 residues: 3-isopropylmalate dehydrogenase (360 aa).

Glycine 76 to glutamate 89 provides a ligand contact to NAD(+). Residues arginine 96, arginine 106, arginine 134, and aspartate 224 each coordinate substrate. Aspartate 224, aspartate 248, and aspartate 252 together coordinate Mg(2+). Glycine 282–asparagine 294 is an NAD(+) binding site.

This sequence belongs to the isocitrate and isopropylmalate dehydrogenases family. LeuB type 1 subfamily. As to quaternary structure, homodimer. The cofactor is Mg(2+). Mn(2+) is required as a cofactor.

It localises to the cytoplasm. The catalysed reaction is (2R,3S)-3-isopropylmalate + NAD(+) = 4-methyl-2-oxopentanoate + CO2 + NADH. It functions in the pathway amino-acid biosynthesis; L-leucine biosynthesis; L-leucine from 3-methyl-2-oxobutanoate: step 3/4. Its function is as follows. Catalyzes the oxidation of 3-carboxy-2-hydroxy-4-methylpentanoate (3-isopropylmalate) to 3-carboxy-4-methyl-2-oxopentanoate. The product decarboxylates to 4-methyl-2 oxopentanoate. In Pseudomonas fluorescens (strain Pf0-1), this protein is 3-isopropylmalate dehydrogenase.